Here is a 185-residue protein sequence, read N- to C-terminus: Ribosome-recycling factor (185 aa).

The protein belongs to the RRF family.

It localises to the cytoplasm. Responsible for the release of ribosomes from messenger RNA at the termination of protein biosynthesis. May increase the efficiency of translation by recycling ribosomes from one round of translation to another. The polypeptide is Ribosome-recycling factor (Beutenbergia cavernae (strain ATCC BAA-8 / DSM 12333 / CCUG 43141 / JCM 11478 / NBRC 16432 / NCIMB 13614 / HKI 0122)).